The chain runs to 172 residues: Transcriptional regulator CdrL (172 aa).

Positions 72 to 113 are disordered; that stretch reads SPSAVEEVRTTPASGGRADAEEPGDDGETDAEHADTSATGDE. Residues 116 to 160 form a DZANK-type zinc finger; it reads CSQCGAELSADHVYCPNCGGKATHRVFCECGDEIRADWAFCPRCG.

The protein belongs to the CdrL family.

It localises to the cytoplasm. In terms of biological role, transcriptional regulator involved in the control of cell division. The chain is Transcriptional regulator CdrL from Halobacterium salinarum (strain ATCC 29341 / DSM 671 / R1).